We begin with the raw amino-acid sequence, 571 residues long: Leucine aminopeptidase A1, chloroplastic (571 aa).

A chloroplast-targeting transit peptide spans Met-1–Cys-53. Lys-342 and Asp-347 together coordinate Mg(2+). Residue Lys-354 is part of the active site. Asp-367, Asp-427, and Glu-429 together coordinate Mg(2+). Arg-431 is an active-site residue.

Belongs to the peptidase M17 family. Homohexamer (dimer of homotrimers). Mg(2+) serves as cofactor. Observed during floral development. Expressed in healthy and senescent leaves, cotyledons (emergence from seed coats), pistils, sepals, petals, stamens, and floral buds (at protein level). Present at very low levels in healthy leaves.

It localises to the plastid. The protein resides in the chloroplast. It carries out the reaction Release of an N-terminal amino acid, Xaa-|-Yaa-, in which Xaa is preferably Leu, but may be other amino acids including Pro although not Arg or Lys, and Yaa may be Pro. Amino acid amides and methyl esters are also readily hydrolyzed, but rates on arylamides are exceedingly low.. The catalysed reaction is Release of N-terminal proline from a peptide.. Functionally, catalyzes the removal of unsubstituted N-terminal amino acids from various peptides. When associated as homohexamer, catalyzes the proteolyzes of Xaa-Leu dipeptides. Possesses leucine aminopeptidase activity against the model substrate leucine-amido methyl coumarin. Presumably involved in the processing and regular turnover of intracellular proteins. Regulates wound signaling and has a role in insect defense. In terms of biological role, functions as a molecular chaperone to protect proteins from heat-induced damage. The chain is Leucine aminopeptidase A1, chloroplastic from Solanum lycopersicum (Tomato).